Here is a 207-residue protein sequence, read N- to C-terminus: Inhibitor of hydrogen peroxide resistance (207 aa).

A DNA-binding region (H-T-H motif) is located at residues 163–182 (MNYIHQRTRISRSVVAEVLA).

It belongs to the IprA family.

In terms of biological role, involved in oxidative stress resistance. This chain is Inhibitor of hydrogen peroxide resistance, found in Escherichia coli O157:H7.